The primary structure comprises 1940 residues: Rho GTPase-activating protein 32 (1940 aa).

The 95-residue stretch at 154–248 folds into the PX; atypical domain; it reads SKELVFLVQI…LTWMEIDNKG (95 aa). An SH3 domain is found at 262-324; sequence PAIAAAHVIK…PSECVELIND (63 aa). The 196-residue stretch at 375–570 folds into the Rho-GAP domain; it reads CDLGEHLLNS…FILNHVEVLF (196 aa). Disordered regions lie at residues 646–746, 1035–1163, 1219–1264, 1430–1454, and 1675–1786; these read FPSE…LSAS, RANQ…FSVT, FTTG…PPVR, KHPR…YTED, and RSRS…HSSA. Positions 1047 to 1061 are enriched in polar residues; that stretch reads PQGASASESPQELSH. Low complexity-rich tracts occupy residues 1081 to 1094 and 1145 to 1163; these read LALA…QASA and SRKT…FSVT. Basic and acidic residues predominate over residues 1691 to 1707; that stretch reads ETKDVRYPGRTEGDERT. The segment covering 1725–1734 has biased composition (polar residues); it reads PQKQSGSSRS. The segment covering 1736-1755 has biased composition (basic and acidic residues); it reads MQHDISTEQHSQDTLHRQPS.

Belongs to the PX domain-containing GAP family.

It localises to the cytoplasm. Its subcellular location is the membrane. The protein localises to the cell membrane. Its function is as follows. GTPase-activating protein (GAP) promoting GTP hydrolysis on RHOA, CDC42 and RAC1 small GTPases. This is Rho GTPase-activating protein 32 (arhgap32) from Xenopus laevis (African clawed frog).